The chain runs to 299 residues: Sulfate adenylyltransferase subunit 2 (299 aa).

Positions 276 to 299 (EREGRVIDHDSAGSMEKKKREGYF) are disordered.

This sequence belongs to the PAPS reductase family. CysD subfamily. As to quaternary structure, heterodimer composed of CysD, the smaller subunit, and CysN.

The catalysed reaction is sulfate + ATP + H(+) = adenosine 5'-phosphosulfate + diphosphate. It functions in the pathway sulfur metabolism; hydrogen sulfide biosynthesis; sulfite from sulfate: step 1/3. In terms of biological role, with CysN forms the ATP sulfurylase (ATPS) that catalyzes the adenylation of sulfate producing adenosine 5'-phosphosulfate (APS) and diphosphate, the first enzymatic step in sulfur assimilation pathway. APS synthesis involves the formation of a high-energy phosphoric-sulfuric acid anhydride bond driven by GTP hydrolysis by CysN coupled to ATP hydrolysis by CysD. The polypeptide is Sulfate adenylyltransferase subunit 2 (Pseudoalteromonas translucida (strain TAC 125)).